We begin with the raw amino-acid sequence, 250 residues long: 1-(5-phosphoribosyl)-5-[(5-phosphoribosylamino)methylideneamino] imidazole-4-carboxamide isomerase (250 aa).

Aspartate 8 serves as the catalytic Proton acceptor. Catalysis depends on aspartate 129, which acts as the Proton donor.

The protein belongs to the HisA/HisF family.

It localises to the cytoplasm. It carries out the reaction 1-(5-phospho-beta-D-ribosyl)-5-[(5-phospho-beta-D-ribosylamino)methylideneamino]imidazole-4-carboxamide = 5-[(5-phospho-1-deoxy-D-ribulos-1-ylimino)methylamino]-1-(5-phospho-beta-D-ribosyl)imidazole-4-carboxamide. Its pathway is amino-acid biosynthesis; L-histidine biosynthesis; L-histidine from 5-phospho-alpha-D-ribose 1-diphosphate: step 4/9. This Desulfovibrio desulfuricans (strain ATCC 27774 / DSM 6949 / MB) protein is 1-(5-phosphoribosyl)-5-[(5-phosphoribosylamino)methylideneamino] imidazole-4-carboxamide isomerase.